A 100-amino-acid chain; its full sequence is Large ribosomal subunit protein uL23 (100 aa).

Belongs to the universal ribosomal protein uL23 family. As to quaternary structure, part of the 50S ribosomal subunit. Contacts protein L29, and trigger factor when it is bound to the ribosome.

Its function is as follows. One of the early assembly proteins it binds 23S rRNA. One of the proteins that surrounds the polypeptide exit tunnel on the outside of the ribosome. Forms the main docking site for trigger factor binding to the ribosome. The sequence is that of Large ribosomal subunit protein uL23 from Dechloromonas aromatica (strain RCB).